We begin with the raw amino-acid sequence, 333 residues long: Thiamine-monophosphate kinase (333 aa).

Asp35, Thr50, and Asp51 together coordinate Mg(2+). Substrate is bound at residue His58. Mg(2+) is bound at residue Asp80. ATP-binding positions include Tyr111, 128 to 129 (GD), and Arg153. Position 129 (Asp129) interacts with Mg(2+). Position 230 (Asp230) interacts with Mg(2+). Residue Ser232 participates in ATP binding. Asp233 provides a ligand contact to Mg(2+). Glu278 and Phe330 together coordinate substrate.

This sequence belongs to the thiamine-monophosphate kinase family.

The enzyme catalyses thiamine phosphate + ATP = thiamine diphosphate + ADP. The protein operates within cofactor biosynthesis; thiamine diphosphate biosynthesis; thiamine diphosphate from thiamine phosphate: step 1/1. Functionally, catalyzes the ATP-dependent phosphorylation of thiamine-monophosphate (TMP) to form thiamine-pyrophosphate (TPP), the active form of vitamin B1. This is Thiamine-monophosphate kinase from Prochlorococcus marinus (strain SARG / CCMP1375 / SS120).